A 293-amino-acid chain; its full sequence is Ribonuclease HIII (293 aa).

The RNase H type-2 domain maps to 78 to 293 (LPLIGTDEVG…TEKAKKRLER (216 aa)). Aspartate 84, glutamate 85, and aspartate 187 together coordinate a divalent metal cation.

Belongs to the RNase HII family. RnhC subfamily. It depends on Mn(2+) as a cofactor. Mg(2+) serves as cofactor.

It localises to the cytoplasm. It carries out the reaction Endonucleolytic cleavage to 5'-phosphomonoester.. Functionally, endonuclease that specifically degrades the RNA of RNA-DNA hybrids. This chain is Ribonuclease HIII, found in Streptococcus pneumoniae (strain 70585).